We begin with the raw amino-acid sequence, 374 residues long: Putative glutamate--cysteine ligase 2 (374 aa).

Belongs to the glutamate--cysteine ligase type 2 family. YbdK subfamily.

It carries out the reaction L-cysteine + L-glutamate + ATP = gamma-L-glutamyl-L-cysteine + ADP + phosphate + H(+). Functionally, ATP-dependent carboxylate-amine ligase which exhibits weak glutamate--cysteine ligase activity. The protein is Putative glutamate--cysteine ligase 2 of Leptothrix cholodnii (strain ATCC 51168 / LMG 8142 / SP-6) (Leptothrix discophora (strain SP-6)).